A 296-amino-acid chain; its full sequence is 4-diphosphocytidyl-2-C-methyl-D-erythritol kinase (296 aa).

Lys-14 is an active-site residue. 97–107 (PMGAGMGGGSS) provides a ligand contact to ATP. The active site involves Asp-139.

The protein belongs to the GHMP kinase family. IspE subfamily.

The enzyme catalyses 4-CDP-2-C-methyl-D-erythritol + ATP = 4-CDP-2-C-methyl-D-erythritol 2-phosphate + ADP + H(+). It functions in the pathway isoprenoid biosynthesis; isopentenyl diphosphate biosynthesis via DXP pathway; isopentenyl diphosphate from 1-deoxy-D-xylulose 5-phosphate: step 3/6. Functionally, catalyzes the phosphorylation of the position 2 hydroxy group of 4-diphosphocytidyl-2C-methyl-D-erythritol. The protein is 4-diphosphocytidyl-2-C-methyl-D-erythritol kinase of Polynucleobacter necessarius subsp. necessarius (strain STIR1).